Here is a 448-residue protein sequence, read N- to C-terminus: Inositol polyphosphate 5-phosphatase K (448 aa).

The tract at residues 16-318 (IHVVTWNVAS…SDHKPVSGTF (303 aa)) is catalytic. The tract at residues 318–448 (FDLELKPLVS…DPLGEAQPQI (131 aa)) is required for interaction with GPR78 and PAK1. Residues 321–448 (ELKPLVSAPL…DPLGEAQPQI (128 aa)) form a required for ruffle localization region.

This sequence belongs to the inositol 1,4,5-trisphosphate 5-phosphatase type II family. In terms of assembly, interacts with GPR78; necessary for INPP5K localization at the endoplasmic reticulum. Interacts with PAK1; competes with GPR78. As to expression, ubiquitously expressed with highest levels in skeletal muscle, heart and kidney.

It is found in the endoplasmic reticulum. It localises to the cytoplasm. It catalyses the reaction 1D-myo-inositol 1,4,5-trisphosphate + H2O = 1D-myo-inositol 1,4-bisphosphate + phosphate. The catalysed reaction is 1D-myo-inositol 1,3,4,5-tetrakisphosphate + H2O = 1D-myo-inositol 1,3,4-trisphosphate + phosphate. It carries out the reaction a 1,2-diacyl-sn-glycero-3-phospho-(1D-myo-inositol-4,5-bisphosphate) + H2O = a 1,2-diacyl-sn-glycero-3-phospho-(1D-myo-inositol 4-phosphate) + phosphate. The enzyme catalyses a 1,2-diacyl-sn-glycero-3-phospho-(1D-myo-inositol-3,4,5-trisphosphate) + H2O = a 1,2-diacyl-sn-glycero-3-phospho-(1D-myo-inositol-3,4-bisphosphate) + phosphate. It catalyses the reaction 1,2-dioctanoyl-sn-glycero-3-phospho-(1D-myo-inositol-3,4,5-trisphosphate) + H2O = 1,2-dioctanoyl-sn-glycero-3-phospho-(1D-myo-inositol-3,4-bisphosphate) + phosphate. In terms of biological role, inositol 5-phosphatase which acts on inositol 1,4,5-trisphosphate, inositol 1,3,4,5-tetrakisphosphate, phosphatidylinositol 4,5-bisphosphate and phosphatidylinositol 3,4,5-trisphosphate. Has 6-fold higher affinity for phosphatidylinositol 4,5-bisphosphate than for inositol 1,4,5-trisphosphate. Negatively regulates assembly of the actin cytoskeleton. Controls insulin-dependent glucose uptake among inositol 3,4,5-trisphosphate phosphatases; therefore, is the specific regulator for insulin signaling in skeletal muscle. The chain is Inositol polyphosphate 5-phosphatase K from Homo sapiens (Human).